The chain runs to 98 residues: Large ribosomal subunit protein uL23 (98 aa).

It belongs to the universal ribosomal protein uL23 family. In terms of assembly, part of the 50S ribosomal subunit. Contacts protein L29, and trigger factor when it is bound to the ribosome.

One of the early assembly proteins it binds 23S rRNA. One of the proteins that surrounds the polypeptide exit tunnel on the outside of the ribosome. Forms the main docking site for trigger factor binding to the ribosome. This is Large ribosomal subunit protein uL23 from Hydrogenovibrio crunogenus (strain DSM 25203 / XCL-2) (Thiomicrospira crunogena).